Here is a 157-residue protein sequence, read N- to C-terminus: Ribosome maturation factor RimP (157 aa).

It belongs to the RimP family.

The protein resides in the cytoplasm. Required for maturation of 30S ribosomal subunits. In Geobacillus sp. (strain WCH70), this protein is Ribosome maturation factor RimP.